A 112-amino-acid chain; its full sequence is Cytochrome c6 (112 aa).

Residues Met-1 to Ala-25 form the signal peptide. The heme c site is built by Cys-39, Cys-42, His-43, and Met-83.

This sequence belongs to the cytochrome c family. PetJ subfamily. In terms of assembly, monomer. In terms of processing, binds 1 heme c group covalently per subunit.

The protein localises to the cellular thylakoid lumen. Its function is as follows. Functions as an electron carrier between membrane-bound cytochrome b6-f and photosystem I in oxygenic photosynthesis. The sequence is that of Cytochrome c6 from Synechococcus sp. (strain ATCC 27167 / PCC 6312).